The chain runs to 256 residues: 5-oxoprolinase subunit A (256 aa).

Belongs to the LamB/PxpA family. Forms a complex composed of PxpA, PxpB and PxpC.

The enzyme catalyses 5-oxo-L-proline + ATP + 2 H2O = L-glutamate + ADP + phosphate + H(+). Its function is as follows. Catalyzes the cleavage of 5-oxoproline to form L-glutamate coupled to the hydrolysis of ATP to ADP and inorganic phosphate. This is 5-oxoprolinase subunit A from Geobacillus kaustophilus (strain HTA426).